We begin with the raw amino-acid sequence, 411 residues long: Multidrug resistance protein MdtA (411 aa).

Residues 1–19 form the signal peptide; that stretch reads MNAKRIRGLLILAAVIAIA. The segment covering 31-49 has biased composition (polar residues); the sequence is PAAPGTSEQHAARTSHSEN. The disordered stretch occupies residues 31 to 58; that stretch reads PAAPGTSEQHAARTSHSENSGSGGGRRA.

It belongs to the membrane fusion protein (MFP) (TC 8.A.1) family. As to quaternary structure, part of a tripartite efflux system composed of MdtA, MdtB and MdtC.

The protein localises to the cell inner membrane. In Pectobacterium atrosepticum (strain SCRI 1043 / ATCC BAA-672) (Erwinia carotovora subsp. atroseptica), this protein is Multidrug resistance protein MdtA.